Here is a 353-residue protein sequence, read N- to C-terminus: Photosystem II protein D1 (353 aa).

T2 is modified (N-acetylthreonine). T2 bears the Phosphothreonine mark. The next 3 helical transmembrane spans lie at 29 to 46, 118 to 133, and 142 to 156; these read YIGW…TATS, HFLL…EWEL, and WIAV…AATA. H118 contacts chlorophyll a. Position 126 (Y126) interacts with pheophytin a. Positions 170 and 189 each coordinate [CaMn4O5] cluster. The chain crosses the membrane as a helical span at residues 197–218; it reads FHMLGVAGVFGGSLFSAMHGSL. Residue H198 participates in chlorophyll a binding. A quinone contacts are provided by residues H215 and 264-265; that span reads SF. Position 215 (H215) interacts with Fe cation. Residue H272 participates in Fe cation binding. A helical membrane pass occupies residues 274-288; that stretch reads FLAAWPVVCIWFTAL. The [CaMn4O5] cluster site is built by H332, E333, D342, and A344. Positions 345–353 are excised as a propeptide; that stretch reads SVDAPAVQG.

This sequence belongs to the reaction center PufL/M/PsbA/D family. In terms of assembly, PSII is composed of 1 copy each of membrane proteins PsbA, PsbB, PsbC, PsbD, PsbE, PsbF, PsbH, PsbI, PsbJ, PsbK, PsbL, PsbM, PsbT, PsbX, PsbY, PsbZ, Psb30/Ycf12, at least 3 peripheral proteins of the oxygen-evolving complex and a large number of cofactors. It forms dimeric complexes. The D1/D2 heterodimer binds P680, chlorophylls that are the primary electron donor of PSII, and subsequent electron acceptors. It shares a non-heme iron and each subunit binds pheophytin, quinone, additional chlorophylls, carotenoids and lipids. D1 provides most of the ligands for the Mn4-Ca-O5 cluster of the oxygen-evolving complex (OEC). There is also a Cl(-1) ion associated with D1 and D2, which is required for oxygen evolution. The PSII complex binds additional chlorophylls, carotenoids and specific lipids. serves as cofactor. Tyr-161 forms a radical intermediate that is referred to as redox-active TyrZ, YZ or Y-Z. Post-translationally, C-terminally processed by CTPA; processing is essential to allow assembly of the oxygen-evolving complex and thus photosynthetic growth.

The protein resides in the plastid. The protein localises to the chloroplast thylakoid membrane. It carries out the reaction 2 a plastoquinone + 4 hnu + 2 H2O = 2 a plastoquinol + O2. Photosystem II (PSII) is a light-driven water:plastoquinone oxidoreductase that uses light energy to abstract electrons from H(2)O, generating O(2) and a proton gradient subsequently used for ATP formation. It consists of a core antenna complex that captures photons, and an electron transfer chain that converts photonic excitation into a charge separation. The D1/D2 (PsbA/PsbD) reaction center heterodimer binds P680, the primary electron donor of PSII as well as several subsequent electron acceptors. The chain is Photosystem II protein D1 from Nephroselmis olivacea (Green alga).